The chain runs to 84 residues: uncharacterized protein (84 aa).

This is an uncharacterized protein from Bos taurus (Bovine).